The chain runs to 303 residues: Protoheme IX farnesyltransferase (303 aa).

9 helical membrane passes run 30-50, 54-74, 101-121, 123-143, 150-170, 178-198, 219-241, 245-262, and 279-299; these read VMSL…STVS, AMIA…LNMW, ALIF…YFAN, ISAV…TIWL, NIVI…TIAT, ITFF…LSLY, STKI…PYAI, GLVF…YNIL, and AKTI…IFLI.

It belongs to the UbiA prenyltransferase family. Protoheme IX farnesyltransferase subfamily.

It localises to the cell inner membrane. The enzyme catalyses heme b + (2E,6E)-farnesyl diphosphate + H2O = Fe(II)-heme o + diphosphate. Its pathway is porphyrin-containing compound metabolism; heme O biosynthesis; heme O from protoheme: step 1/1. In terms of biological role, converts heme B (protoheme IX) to heme O by substitution of the vinyl group on carbon 2 of heme B porphyrin ring with a hydroxyethyl farnesyl side group. This is Protoheme IX farnesyltransferase from Pelagibacter ubique (strain HTCC1062).